A 307-amino-acid polypeptide reads, in one-letter code: tRNA-cytidine(32) 2-sulfurtransferase (307 aa).

Residues 44–49 (SGGKDS) carry the PP-loop motif motif. Residues cysteine 119, cysteine 122, and cysteine 210 each contribute to the [4Fe-4S] cluster site.

Belongs to the TtcA family. In terms of assembly, homodimer. The cofactor is Mg(2+). Requires [4Fe-4S] cluster as cofactor.

Its subcellular location is the cytoplasm. The catalysed reaction is cytidine(32) in tRNA + S-sulfanyl-L-cysteinyl-[cysteine desulfurase] + AH2 + ATP = 2-thiocytidine(32) in tRNA + L-cysteinyl-[cysteine desulfurase] + A + AMP + diphosphate + H(+). It functions in the pathway tRNA modification. Its function is as follows. Catalyzes the ATP-dependent 2-thiolation of cytidine in position 32 of tRNA, to form 2-thiocytidine (s(2)C32). The sulfur atoms are provided by the cysteine/cysteine desulfurase (IscS) system. This Aliivibrio salmonicida (strain LFI1238) (Vibrio salmonicida (strain LFI1238)) protein is tRNA-cytidine(32) 2-sulfurtransferase.